The primary structure comprises 338 residues: MTKQKIAVLGPGSWGTALAQVLNDNGHEVRLWGNVVEQIEEINTNHTNQRYFKDITLDSKIKAYTNLEEAINNVDSILFVVPTKVTRLVAKQVANLLKHKVVLMHASKGLEPGTHERLSTILEEEISEQYRSDIVVVSGPSHAEEAIVRDITLITAASKDIEAAKYVQKLFSNHYFRLYTNTDVVGVETAGALKNIIAVGAGALHGLGYGDNAKAAIITRGLAEITRLGVQLGADPLTFSGLSGVGDLIVTGTSVHSRNWRAGDALGRGEKLEDIEKNMGMVIEGISTTKVAYEIAQNLNVYMPITEAIYKSIYEGANIKDSILDMMSNEFRSENEWH.

NADPH contacts are provided by Ser13, Trp14, and Lys108. The sn-glycerol 3-phosphate site is built by Lys108, Gly139, and Ser141. Ala143 is a binding site for NADPH. Positions 194, 247, 257, 258, and 259 each coordinate sn-glycerol 3-phosphate. Lys194 serves as the catalytic Proton acceptor. Residue Arg258 coordinates NADPH. The NADPH site is built by Val282 and Glu284.

Belongs to the NAD-dependent glycerol-3-phosphate dehydrogenase family.

It is found in the cytoplasm. It catalyses the reaction sn-glycerol 3-phosphate + NAD(+) = dihydroxyacetone phosphate + NADH + H(+). It carries out the reaction sn-glycerol 3-phosphate + NADP(+) = dihydroxyacetone phosphate + NADPH + H(+). Its pathway is membrane lipid metabolism; glycerophospholipid metabolism. In terms of biological role, catalyzes the reduction of the glycolytic intermediate dihydroxyacetone phosphate (DHAP) to sn-glycerol 3-phosphate (G3P), the key precursor for phospholipid synthesis. The polypeptide is Glycerol-3-phosphate dehydrogenase [NAD(P)+] (Streptococcus agalactiae serotype V (strain ATCC BAA-611 / 2603 V/R)).